The chain runs to 433 residues: Probable mannose-6-phosphate isomerase (433 aa).

4 residues coordinate Zn(2+): glutamine 103, histidine 105, glutamate 130, and histidine 277. Residue arginine 296 is part of the active site.

It belongs to the mannose-6-phosphate isomerase type 1 family. Requires Zn(2+) as cofactor.

It localises to the cytoplasm. The catalysed reaction is D-mannose 6-phosphate = D-fructose 6-phosphate. It participates in nucleotide-sugar biosynthesis; GDP-alpha-D-mannose biosynthesis; alpha-D-mannose 1-phosphate from D-fructose 6-phosphate: step 1/2. Functionally, involved in the synthesis of the GDP-mannose and dolichol-phosphate-mannose required for a number of critical mannosyl transfer reactions. The polypeptide is Probable mannose-6-phosphate isomerase (PMIH) (Echinococcus multilocularis (Fox tapeworm)).